Consider the following 432-residue polypeptide: Peptidase B (432 aa).

Mn(2+) is bound by residues K196 and D201. Residue K208 is part of the active site. 3 residues coordinate Mn(2+): D219, D278, and E280. R282 is a catalytic residue.

It belongs to the peptidase M17 family. As to quaternary structure, homohexamer. It depends on Mn(2+) as a cofactor.

Its subcellular location is the cytoplasm. It carries out the reaction Release of an N-terminal amino acid, Xaa, from a peptide or arylamide. Xaa is preferably Glu or Asp but may be other amino acids, including Leu, Met, His, Cys and Gln.. In terms of biological role, probably plays an important role in intracellular peptide degradation. The chain is Peptidase B from Yersinia pestis bv. Antiqua (strain Antiqua).